A 185-amino-acid polypeptide reads, in one-letter code: MINEIKKDAKERMTKSVESLAHNFGRIRTGQAHPSILEGVMVPYYGADTPIKQVANITVKDARTLQVVAFERNMLGAVDKAIGSAGLNLNPTNLGELLLISMPALTEETRRGFTKQARDVAEDARVAVRNIRRDANSSLKDLVKEKEISEDEERRAAGEIDDLTKKFVAEIDAKLAEKEKDLMAV.

It belongs to the RRF family.

The protein resides in the cytoplasm. In terms of biological role, responsible for the release of ribosomes from messenger RNA at the termination of protein biosynthesis. May increase the efficiency of translation by recycling ribosomes from one round of translation to another. The sequence is that of Ribosome-recycling factor from Pseudomonas fluorescens (strain Pf0-1).